Here is a 265-residue protein sequence, read N- to C-terminus: GTP cyclohydrolase FolE2 (265 aa).

It belongs to the GTP cyclohydrolase IV family.

It carries out the reaction GTP + H2O = 7,8-dihydroneopterin 3'-triphosphate + formate + H(+). It functions in the pathway cofactor biosynthesis; 7,8-dihydroneopterin triphosphate biosynthesis; 7,8-dihydroneopterin triphosphate from GTP: step 1/1. Converts GTP to 7,8-dihydroneopterin triphosphate. The chain is GTP cyclohydrolase FolE2 from Bordetella avium (strain 197N).